The following is a 336-amino-acid chain: uncharacterized protein (336 aa).

The 201-residue stretch at 123 to 323 (KTLMRDSGVP…YSSLINGILD (201 aa)) folds into the ATP-grasp domain.

The protein belongs to the D-alanine--D-alanine ligase family.

Functionally, could be involved in the biosynthesis of a cell wall component. This is an uncharacterized protein from Sinorhizobium fredii (strain NBRC 101917 / NGR234).